Here is a 439-residue protein sequence, read N- to C-terminus: Nitroalkane oxidase (439 aa).

FAD is bound by residues 131–134, 139–141, 169–171, arginine 304, 313–314, 375–379, and 400–404; these read LMHS, TAN, WPS, HQ, KAVGM, and LFDGG. Residue aspartate 402 is the Proton acceptor of the active site.

It belongs to the acyl-CoA dehydrogenase family. In terms of assembly, homotetramer. FAD serves as cofactor.

It catalyses the reaction a primary nitroalkane + O2 + H2O = an aldehyde + nitrite + H2O2 + H(+). The catalysed reaction is a secondary nitroalkane + O2 + H2O = a ketone + nitrite + H2O2 + H(+). Its activity is regulated as follows. Strongly inhibited by mercury chloride and KCN. In terms of biological role, catalyzes the oxidative denitrification of neutral nitroalkanes, including 3-nitro-2-pentanol, 1-nitropropane, 2-nitropropane, nitroethane and nitrocyclohexane, and may thereby protect the organism against toxic compounds. Has no detectable acyl-CoA dehydrogenase activity. The polypeptide is Nitroalkane oxidase (Fusarium oxysporum (Fusarium vascular wilt)).